The following is a 305-amino-acid chain: D-alanine--D-alanine ligase (305 aa).

Residues 105-300 enclose the ATP-grasp domain; it reads KMIWQAAGIN…FDELVVQILE (196 aa). 131-186 provides a ligand contact to ATP; the sequence is ADRLGLPLIIKPAREGSTLGLNKVDNEQDFRSAYQAAAEYDSLVLAEQFIQGIELT. Mg(2+) is bound by residues D254, E267, and N269.

The protein belongs to the D-alanine--D-alanine ligase family. Requires Mg(2+) as cofactor. The cofactor is Mn(2+).

It is found in the cytoplasm. The enzyme catalyses 2 D-alanine + ATP = D-alanyl-D-alanine + ADP + phosphate + H(+). Its pathway is cell wall biogenesis; peptidoglycan biosynthesis. Functionally, cell wall formation. This Nitrosomonas europaea (strain ATCC 19718 / CIP 103999 / KCTC 2705 / NBRC 14298) protein is D-alanine--D-alanine ligase.